Reading from the N-terminus, the 272-residue chain is Transcription factor PU.1 (272 aa).

Residues 126-165 (SPAHQQSSDEEEGERQSPPLEVSDGEADGLEPGPGLLHGE) are disordered. Residues Ser142 and Ser148 each carry the phosphoserine modification. The segment covering 155–165 (LEPGPGLLHGE) has biased composition (low complexity). Positions 172 to 255 (IRLYQFLLDL…VKKKLTYQFS (84 aa)) form a DNA-binding region, ETS. DNA contacts are provided by Lys219, Arg232, Arg235, and Lys245.

The protein belongs to the ETS family. As to quaternary structure, binds DNA as a monomer. Can form homomers. Directly interacts with CEBPD/NF-IL6-beta; this interaction does not affect DNA-binding properties of each partner. Interacts with NONO/p54(nrb). Interacts with RUNX1/AML1. Interacts with GFI1; the interaction represses SPI1 transcriptional activity, hence blocks SPI1-induced macrophage differentiation of myeloid progenitor cells. Interacts with CEBPE. Interacts with IRF4/Pip and IRF8. Interacts with JUN. Interacts with RB1. Interacts with TBP. As to expression, expressed in spleen, thymus and bone-marrow macrophages.

It localises to the nucleus. Its activity is regulated as follows. Transcriptional activity at macrophage-specific genes is inhibited by interaction with GFI1, which results in inhibition of SPI1-induced macrophage differentiation of myeloid progenitor cells, but not that of the granulocyte lineage. Pioneer transcription factor, which controls hematopoietic cell fate by decompacting stem cell heterochromatin and allowing other transcription factors to enter otherwise inaccessible genomic sites. Once in open chromatin, can directly control gene expression by binding genetic regulatory elements and can also more broadly influence transcription by recruiting transcription factors, such as interferon regulatory factors (IRFs), to otherwise inaccessible genomic regions. Transcriptionally activates genes important for myeloid and lymphoid lineages, such as CSF1R. Transcriptional activation from certain promoters, possibly containing low affinity binding sites, is achieved cooperatively with other transcription factors. FCER1A transactivation is achieved in cooperation with GATA1. May be particularly important for the pro- to pre-B cell transition. Binds (via the ETS domain) onto the purine-rich DNA core sequence 5'-GAGGAA-3', also known as the PU-box. In vitro can bind RNA and interfere with pre-mRNA splicing. The protein is Transcription factor PU.1 (Spi1) of Mus musculus (Mouse).